A 269-amino-acid chain; its full sequence is 3-methyl-2-oxobutanoate hydroxymethyltransferase (269 aa).

Mg(2+) is bound by residues D49 and D88. Residues 49–50, D88, and K118 contribute to the 3-methyl-2-oxobutanoate site; that span reads DS. Residue E120 coordinates Mg(2+). E186 (proton acceptor) is an active-site residue.

It belongs to the PanB family. In terms of assembly, homodecamer; pentamer of dimers. It depends on Mg(2+) as a cofactor.

Its subcellular location is the cytoplasm. The enzyme catalyses 3-methyl-2-oxobutanoate + (6R)-5,10-methylene-5,6,7,8-tetrahydrofolate + H2O = 2-dehydropantoate + (6S)-5,6,7,8-tetrahydrofolate. It participates in cofactor biosynthesis; (R)-pantothenate biosynthesis; (R)-pantoate from 3-methyl-2-oxobutanoate: step 1/2. In terms of biological role, catalyzes the reversible reaction in which hydroxymethyl group from 5,10-methylenetetrahydrofolate is transferred onto alpha-ketoisovalerate to form ketopantoate. The sequence is that of 3-methyl-2-oxobutanoate hydroxymethyltransferase from Pelobacter propionicus (strain DSM 2379 / NBRC 103807 / OttBd1).